The sequence spans 84 residues: Mu-conotoxin-like Cal 12.2a (84 aa).

The first 19 residues, 1–19, serve as a signal peptide directing secretion; sequence MKLTCVLVVLLLVLPFGDL. The propeptide occupies 20-42; sequence ITTSNTEDNKRGATPWQNSLKAR. 4 disulfide bridges follow: Cys-45–Cys-57, Cys-52–Cys-65, Cys-59–Cys-70, and Cys-64–Cys-76. Pro-48 is modified (4-hydroxyproline). Trp-72 carries the 6'-bromotryptophan modification. Pro-77 is modified (4-hydroxyproline). Trp-81 is modified (6'-bromotryptophan).

The protein belongs to the conotoxin O1 superfamily. As to expression, expressed by the venom duct.

The protein localises to the secreted. Functionally, mu-conotoxins block voltage-gated sodium channels. This toxin reversibly blocks voltage-gated sodium channel in cephalopods, with no alteration in the voltage dependence of sodium conductance or on the kinetics of inactivation. This Californiconus californicus (California cone) protein is Mu-conotoxin-like Cal 12.2a.